We begin with the raw amino-acid sequence, 143 residues long: Transcriptional regulator MraZ (143 aa).

2 SpoVT-AbrB domains span residues 5-47 (EYQH…PMHE) and 76-119 (ATEC…SKVI).

This sequence belongs to the MraZ family. In terms of assembly, forms oligomers.

The protein localises to the cytoplasm. The protein resides in the nucleoid. The chain is Transcriptional regulator MraZ from Bacillus subtilis (strain 168).